Here is a 319-residue protein sequence, read N- to C-terminus: Probable deoxyhypusine synthase (319 aa).

Lys287 acts as the Nucleophile in catalysis.

It belongs to the deoxyhypusine synthase family. It depends on NAD(+) as a cofactor.

The enzyme catalyses [eIF5A protein]-L-lysine + spermidine = [eIF5A protein]-deoxyhypusine + propane-1,3-diamine. Its pathway is protein modification; eIF5A hypusination. Its function is as follows. Catalyzes the NAD-dependent oxidative cleavage of spermidine and the subsequent transfer of the butylamine moiety of spermidine to the epsilon-amino group of a specific lysine residue of the eIF-5A precursor protein to form the intermediate deoxyhypusine residue. This is Probable deoxyhypusine synthase from Ignicoccus hospitalis (strain KIN4/I / DSM 18386 / JCM 14125).